The sequence spans 91 residues: MKVKAVAKQVPVTPRKXRLVVDLIRGKKIKEAESILMFTPRSASPILAKLLKSAVANSVHNFNFNIDDLYVEEIFVNEGIRLPRLFPRAKG.

The protein belongs to the universal ribosomal protein uL22 family. As to quaternary structure, part of the 50S ribosomal subunit.

In terms of biological role, this protein binds specifically to 23S rRNA; its binding is stimulated by other ribosomal proteins, e.g. L4, L17, and L20. It is important during the early stages of 50S assembly. It makes multiple contacts with different domains of the 23S rRNA in the assembled 50S subunit and ribosome. The globular domain of the protein is located near the polypeptide exit tunnel on the outside of the subunit, while an extended beta-hairpin is found that lines the wall of the exit tunnel in the center of the 70S ribosome. This Ash yellows phytoplasma protein is Large ribosomal subunit protein uL22 (rplV).